The chain runs to 117 residues: Immunoglobulin lambda variable 1-44 (117 aa).

An N-terminal signal peptide occupies residues methionine 1–alanine 19. The residue at position 20 (glutamine 20) is a Pyrrolidone carboxylic acid. Residues glutamine 20–serine 44 form a framework-1 region. Positions glutamine 20 to glycine 117 constitute an Ig-like domain. Polar residues predominate over residues threonine 24–glutamine 35. Positions threonine 24–serine 45 are disordered. Cysteine 41 and cysteine 108 are disulfide-bonded. The tract at residues serine 45–threonine 52 is complementarity-determining-1. The framework-2 stretch occupies residues valine 53–tyrosine 69. The tract at residues serine 70–asparagine 72 is complementarity-determining-2. Residues glutamine 73–cysteine 108 are framework-3. Residues alanine 109 to glycine 117 are complementarity-determining-3.

Immunoglobulins are composed of two identical heavy chains and two identical light chains; disulfide-linked.

Its subcellular location is the secreted. The protein resides in the cell membrane. Its function is as follows. V region of the variable domain of immunoglobulin light chains that participates in the antigen recognition. Immunoglobulins, also known as antibodies, are membrane-bound or secreted glycoproteins produced by B lymphocytes. In the recognition phase of humoral immunity, the membrane-bound immunoglobulins serve as receptors which, upon binding of a specific antigen, trigger the clonal expansion and differentiation of B lymphocytes into immunoglobulins-secreting plasma cells. Secreted immunoglobulins mediate the effector phase of humoral immunity, which results in the elimination of bound antigens. The antigen binding site is formed by the variable domain of one heavy chain, together with that of its associated light chain. Thus, each immunoglobulin has two antigen binding sites with remarkable affinity for a particular antigen. The variable domains are assembled by a process called V-(D)-J rearrangement and can then be subjected to somatic hypermutations which, after exposure to antigen and selection, allow affinity maturation for a particular antigen. The sequence is that of Immunoglobulin lambda variable 1-44 from Homo sapiens (Human).